The following is a 94-amino-acid chain: Ig kappa-B5 chain V region 2699 (94 aa).

The interval 1–23 (AFELTQTPSSVEAAVGGTVTINC) is framework-1. Positions 24 to 34 (QASTDISSNLA) are complementarity-determining-1. The segment at 35-49 (WYTPKPGSPPKLLIY) is framework-2. The complementarity-determining-2 stretch occupies residues 50–56 (SASTLAS). Residues 57–82 (GVSSRFKGSGSGVLITLTISDLECGV) are framework-3. Position 83 (Ser-83) is a region of interest, complementarity-determining-3. The segment at 84–93 (FGGGTKVVVE) is framework-4.

The protein is Ig kappa-B5 chain V region 2699 of Oryctolagus cuniculus (Rabbit).